A 60-amino-acid polypeptide reads, in one-letter code: Large ribosomal subunit protein eL37 (60 aa).

Zn(2+) contacts are provided by Cys-19, Cys-22, Cys-34, and Cys-37. The C4-type zinc-finger motif lies at 19-37; that stretch reads CRRCGSISYHARHKVCSAC.

The protein belongs to the eukaryotic ribosomal protein eL37 family. Zn(2+) is required as a cofactor.

Functionally, binds to the 23S rRNA. In Methanosphaerula palustris (strain ATCC BAA-1556 / DSM 19958 / E1-9c), this protein is Large ribosomal subunit protein eL37.